Reading from the N-terminus, the 209-residue chain is Chromophore lyase CpcT/CpeT 1 (209 aa).

This sequence belongs to the CpcT/CpeT biliprotein lyase family.

Functionally, covalently attaches a chromophore to Cys residue(s) of phycobiliproteins. The protein is Chromophore lyase CpcT/CpeT 1 of Trichodesmium erythraeum (strain IMS101).